A 349-amino-acid chain; its full sequence is Thioredoxin reductase, mitochondrial (349 aa).

A mitochondrion-targeting transit peptide spans 1–30 (MLLVRNSTLGRLSSLRGFFRNINESNIFYR). Residues 41 to 44 (SGPA), 70 to 71 (IA), glutamine 75, asparagine 84, valine 117, cysteine 175, aspartate 318, and 325 to 327 (RQA) each bind FAD. The cysteines at positions 172 and 175 are disulfide-linked.

Belongs to the class-II pyridine nucleotide-disulfide oxidoreductase family. As to quaternary structure, homodimer. The cofactor is FAD.

Its subcellular location is the mitochondrion. The catalysed reaction is [thioredoxin]-dithiol + NADP(+) = [thioredoxin]-disulfide + NADPH + H(+). The sequence is that of Thioredoxin reductase, mitochondrial (TRR1) from Kluyveromyces lactis (strain ATCC 8585 / CBS 2359 / DSM 70799 / NBRC 1267 / NRRL Y-1140 / WM37) (Yeast).